The following is a 241-amino-acid chain: MNFRDKAIILKKRNIKENLAIVTVLTQSYGIYSGIIKDLHSKKNTIIYQIGNIVDFCWSARLDEHLGTINCELVKSYSYLIMSNKRNLLYTHSLIELTLMSFKERELHANLFEKWLENLESINTGNINVKNYINFELLILKEAGYRLNLDRCGVTNCTQNLIYVSPKSGQAISATVGEPYKHKLLLLPKFLVHNNCEPEDIYEIQAAFNLTAYFFNKYILIKKKLPITRELLLKSILEYSF.

It belongs to the RecO family.

Functionally, involved in DNA repair and RecF pathway recombination. The sequence is that of DNA repair protein RecO from Orientia tsutsugamushi (strain Ikeda) (Rickettsia tsutsugamushi).